The chain runs to 1133 residues: Error-prone DNA polymerase (1133 aa).

This sequence belongs to the DNA polymerase type-C family. DnaE2 subfamily.

The protein resides in the cytoplasm. The enzyme catalyses DNA(n) + a 2'-deoxyribonucleoside 5'-triphosphate = DNA(n+1) + diphosphate. DNA polymerase involved in damage-induced mutagenesis and translesion synthesis (TLS). It is not the major replicative DNA polymerase. This Anaeromyxobacter sp. (strain K) protein is Error-prone DNA polymerase.